The primary structure comprises 319 residues: MEKEADNKFRWVIKNFSSLGSERVFSDIFVVGSCKWRLMAYPKGVRDNRCFSLFLVVTDFKTLPCDWKRHTRLRLNVVNQLSEELSILKETQMWFDQKTPAWGFLAMLPLTELKAENGGFLVNEEVKIVVEVDVVEALGKLEESEEATQPLKKVKLEAFVESKGLLKETSSVKEEIIDVNVFHVLPSQVEFVSRVFERYPEIASIFQAKKQHLRTACMYVLLSLIETLCKSLEELSNDDLVGGDNALQYLKFSGFKVDWLEKKLEEVKEKKKEEQIGETRMQEMKVFKQKCSDIEALMEREKSKLLVTRGSPLTLDDVL.

Residues 6–132 (DNKFRWVIKN…NEEVKIVVEV (127 aa)) enclose the MATH domain. Positions 255–302 (FKVDWLEKKLEEVKEKKKEEQIGETRMQEMKVFKQKCSDIEALMEREK) form a coiled coil.

The sequence is that of MATH domain and coiled-coil domain-containing protein At3g58200 from Arabidopsis thaliana (Mouse-ear cress).